Here is a 1080-residue protein sequence, read N- to C-terminus: Putative bifunctional amine oxidase DDB_G0291301 (1080 aa).

The putative sarcosine oxidase stretch occupies residues 1–450 (MREFLKDDYD…TIAKSTVPTN (450 aa)). Position 10-40 (10-40 (DVIVCGGGPVGLATAYRCAKAGKKVLCLEKS)) interacts with FAD. Residues 445–464 (STVPTNQSSNPDGASSTAPT) form a disordered region. The segment at 450 to 1080 (NQSSNPDGAS…NTAASIGGLK (631 aa)) is putative L-amino-acid oxidase. The chain crosses the membrane as a helical span at residues 508-528 (VGIIGAGMAGLYAAMILQDLG). Residues Glu535, Arg544, and 563–564 (GA) each bind FAD. Tyr886 contributes to the substrate binding site. FAD contacts are provided by residues Glu978 and 987–990 (VIGS).

This sequence in the N-terminal section; belongs to the MSOX/MTOX family. It in the C-terminal section; belongs to the flavin monoamine oxidase family. The cofactor is FAD.

The protein resides in the membrane. It carries out the reaction sarcosine + O2 + H2O = formaldehyde + glycine + H2O2. The catalysed reaction is L-pipecolate + O2 = L-1-piperideine-6-carboxylate + H2O2 + H(+). The enzyme catalyses an L-alpha-amino acid + O2 + H2O = a 2-oxocarboxylate + H2O2 + NH4(+). Functionally, catalyzes an oxidative deamination of predominantly hydrophobic and aromatic L-amino acids. Metabolizes sarcosine, L-pipecolic acid and L-proline. The sequence is that of Putative bifunctional amine oxidase DDB_G0291301 from Dictyostelium discoideum (Social amoeba).